The chain runs to 261 residues: Thiamine thiazole synthase (261 aa).

NAD(+) is bound by residues Ala-33, 52-53 (ER), Gly-60, Val-124, and 152-154 (HVD). Fe cation contacts are provided by Asp-154 and His-169. Met-219 contacts NAD(+). Arg-229 contacts glycine.

This sequence belongs to the THI4 family. As to quaternary structure, homooctamer; tetramer of dimers. It depends on Fe(2+) as a cofactor.

It carries out the reaction hydrogen sulfide + glycine + NAD(+) = ADP-5-ethyl-4-methylthiazole-2-carboxylate + nicotinamide + 3 H2O + H(+). It functions in the pathway cofactor biosynthesis; thiamine diphosphate biosynthesis. Involved in the biosynthesis of the thiazole moiety of thiamine. Catalyzes the conversion of NAD and glycine to adenosine diphosphate 5-(2-hydroxyethyl)-4-methylthiazole-2-carboxylate (ADT), an adenylated thiazole intermediate, using free sulfide as a source of sulfur. The polypeptide is Thiamine thiazole synthase (Pyrobaculum islandicum (strain DSM 4184 / JCM 9189 / GEO3)).